A 919-amino-acid chain; its full sequence is Isoleucine--tRNA ligase (919 aa).

The short motif at 57 to 67 (PYANGDIHMGT) is the 'HIGH' region element. An L-isoleucyl-5'-AMP-binding site is contributed by E552. The 'KMSKS' region motif lies at 593–597 (KMSKS). K596 is an ATP binding site. Residues C886, C889, C906, and C909 each contribute to the Zn(2+) site.

Belongs to the class-I aminoacyl-tRNA synthetase family. IleS type 1 subfamily. In terms of assembly, monomer. It depends on Zn(2+) as a cofactor.

It localises to the cytoplasm. It carries out the reaction tRNA(Ile) + L-isoleucine + ATP = L-isoleucyl-tRNA(Ile) + AMP + diphosphate. Functionally, catalyzes the attachment of isoleucine to tRNA(Ile). As IleRS can inadvertently accommodate and process structurally similar amino acids such as valine, to avoid such errors it has two additional distinct tRNA(Ile)-dependent editing activities. One activity is designated as 'pretransfer' editing and involves the hydrolysis of activated Val-AMP. The other activity is designated 'posttransfer' editing and involves deacylation of mischarged Val-tRNA(Ile). The polypeptide is Isoleucine--tRNA ligase (Petrotoga mobilis (strain DSM 10674 / SJ95)).